An 83-amino-acid chain; its full sequence is Large ribosomal subunit protein bL31B (83 aa).

The protein belongs to the bacterial ribosomal protein bL31 family. Type B subfamily. Part of the 50S ribosomal subunit.

This Levilactobacillus brevis (strain ATCC 367 / BCRC 12310 / CIP 105137 / JCM 1170 / LMG 11437 / NCIMB 947 / NCTC 947) (Lactobacillus brevis) protein is Large ribosomal subunit protein bL31B.